Consider the following 302-residue polypeptide: Nucleotide-binding protein STH186 (302 aa).

15 to 22 (GMSGAGKT) lines the ATP pocket. 66-69 (DIRG) provides a ligand contact to GTP.

This sequence belongs to the RapZ-like family.

In terms of biological role, displays ATPase and GTPase activities. The polypeptide is Nucleotide-binding protein STH186 (Symbiobacterium thermophilum (strain DSM 24528 / JCM 14929 / IAM 14863 / T)).